Consider the following 59-residue polypeptide: UPF0434 protein Rsph17029_0141 (59 aa).

This sequence belongs to the UPF0434 family.

The sequence is that of UPF0434 protein Rsph17029_0141 from Cereibacter sphaeroides (strain ATCC 17029 / ATH 2.4.9) (Rhodobacter sphaeroides).